The sequence spans 833 residues: Leucine--tRNA ligase (833 aa).

A 'HIGH' region motif is present at residues proline 41–histidine 52. The short motif at lysine 610–serine 614 is the 'KMSKS' region element. Residue lysine 613 participates in ATP binding.

The protein belongs to the class-I aminoacyl-tRNA synthetase family.

Its subcellular location is the cytoplasm. It catalyses the reaction tRNA(Leu) + L-leucine + ATP = L-leucyl-tRNA(Leu) + AMP + diphosphate. The polypeptide is Leucine--tRNA ligase (Streptococcus agalactiae serotype III (strain NEM316)).